The following is a 615-amino-acid chain: Dehydrogenase str4 (615 aa).

Residues 45-46, 66-67, and 123-126 contribute to the FAD site; these read TA, EA, and NGSM. The active-site Proton acceptor is the H552. FAD is bound by residues A585 and 596–597; that span reads PA.

Belongs to the GMC oxidoreductase family. Homodimer. It depends on FAD as a cofactor.

It participates in mycotoxin biosynthesis. In terms of biological role, dehydrogenase; part of the gene cluster that mediates the biosynthesis of strobilurin A, an antifungal polyketide that contains a key beta-methoxyacrylate toxophore that targets the complex III of the mitochondrial electron transport chain. Strobilurin biosynthesis begins with construction of benzoyl CoA by step-wise elimination of ammonia from phenylalanine by the phenylalanine ammonia-lyase str11, oxygenation by str8 and retro-Claisen reaction to form benzoic acid, which is activated to its CoA thiolester benzoyl CoA by the dedicated CoA ligase str10. Benzoyl CoA forms the starter unit for the highly reducing polyketide synthase stpks1 that produces the polyketide prestrobilutin A. The FAD-dependent oxygenase str9 then catalyzes the key oxidative rearrangement responsible for the creation of the beta-methoxyacrylate toxophore. Str9 performs epoxidation of the 2,3 olefin of prestrobilutin A, followed by Meinwald rearrangement to furnish the aldehyde intermediate. Rapid enolization of the aldehyde intermediate would give the beta-methoxyacrylate skeleton and methylations catalyzed by str2 and str3 complete the synthesis and lead to the production of strobilurin A. The short-chain dehydrogenase stl2 and the dehydrogenase str4 play a role in the shunt pathway leading to the production of bolineol. The cluster encodes no obvious halogenase gene that could be involved in production of strobilurin B, nor any obvious dimethylallyl-transferase that could be involved in the production of strobilurin G. It is possible that unknown proteins encoded in, or near, the cluster (such as str1 or stl1) may form new classes of halogenases or dimethylally-transferases, or that the responsible genes are located elsewhere on the genome. Similarly, proteins encoded by str5/str6 hydrolases appear to have no chemical role in the biosynthesis of strobilurin A. Finally, no obvious self-resistance gene is found within the cluster. This chain is Dehydrogenase str4, found in Strobilurus tenacellus.